We begin with the raw amino-acid sequence, 115 residues long: MQSCRVQCALTLLSLALAINSISAAPTDPRLRQFLQKSLASAGKQELAKYFLAELLSEPSQTDNEALESDDLPRGAEQDEVRLELERSANSSPALAPRERKAGCKNFFWKTFTSC.

The first 24 residues, 1–24 (MQSCRVQCALTLLSLALAINSISA), serve as a signal peptide directing secretion. A propeptide spanning residues 25–99 (APTDPRLRQF…NSSPALAPRE (75 aa)) is cleaved from the precursor. The segment at 60–79 (SQTDNEALESDDLPRGAEQD) is disordered. A disulfide bridge connects residues Cys-104 and Cys-115.

This sequence belongs to the somatostatin family.

The protein localises to the secreted. In terms of biological role, somatostatin inhibits the release of somatotropin. This is Somatostatin-1 (sst1) from Pelophylax ridibundus (Marsh frog).